We begin with the raw amino-acid sequence, 133 residues long: Large ribosomal subunit protein bL20 (133 aa).

The protein belongs to the bacterial ribosomal protein bL20 family.

Functionally, binds directly to 23S ribosomal RNA and is necessary for the in vitro assembly process of the 50S ribosomal subunit. It is not involved in the protein synthesizing functions of that subunit. This Chelativorans sp. (strain BNC1) protein is Large ribosomal subunit protein bL20.